The sequence spans 497 residues: PHD finger protein 10 (497 aa).

The interval 1–61 (MAAAGPGAAL…SSRSCETSSQ (61 aa)) is disordered. 3 positions are modified to phosphoserine: Ser-11, Ser-35, and Ser-49. Positions 88–184 (MLQEQVSEYL…HYKEYSQMQQ (97 aa)) are essential to induce neural progenitor proliferation. Residues 88-294 (MLQEQVSEYL…PPLDPELPAL (207 aa)) are SAY. A Glycyl lysine isopeptide (Lys-Gly) (interchain with G-Cter in SUMO2) cross-link involves residue Lys-240. Ser-269 is modified (phosphoserine). Residues 284–295 (EPPLDPELPALD) show a composition bias toward low complexity. The disordered stretch occupies residues 284–367 (EPPLDPELPA…KRSVLSKSVP (84 aa)). The tract at residues 291–333 (LPALDSDGDSDDGEDGGGDEKRKNKGTSDSSSGNVSEGDSPPD) is essential to induce neural progenitor proliferation. Phosphoserine occurs at positions 296, 300, 326, and 330. A compositionally biased stretch (acidic residues) spans 296–307 (SDGDSDDGEDGG). Positions 317–327 (TSDSSSGNVSE) are enriched in polar residues. Basic and acidic residues predominate over residues 344 to 358 (KSKDKMATPRKDGSK). A PHD-type 1; degenerate zinc finger spans residues 378 to 435 (LCGICLKGKESNKKGKAESLIHCSQCDNSGHPSCLDMTMELVSMIKTYPWQCMECKTC). Lys-384 is covalently cross-linked (Glycyl lysine isopeptide (Lys-Gly) (interchain with G-Cter in SUMO2)). The segment at 437 to 480 (ICGQPHHEEEMMFCDVCDRGYHTFCVGLGAIPSGRWICDCCQRA) adopts a PHD-type 2; degenerate zinc-finger fold.

This sequence belongs to the SAYP family. Component of neural progenitors-specific chromatin remodeling complex (npBAF complex) composed of at least, ARID1A/BAF250A or ARID1B/BAF250B, SMARCD1/BAF60A, SMARCD3/BAF60C, SMARCA2/BRM/BAF190B, SMARCA4/BRG1/BAF190A, SMARCB1/BAF47, SMARCC1/BAF155, SMARCE1/BAF57, SMARCC2/BAF170, PHF10/BAF45A, ACTL6A/BAF53A and actin. Interacts with ACTL6A/BAF53A, SMARCA2/BRM/BAF190B, SMARCA4/BRG1/BAF190A and PBRM1/BAF180.

The protein localises to the nucleus. Functionally, involved in transcription activity regulation by chromatin remodeling. Belongs to the neural progenitors-specific chromatin remodeling complex (npBAF complex) and is required for the proliferation of neural progenitors. During neural development a switch from a stem/progenitor to a post-mitotic chromatin remodeling mechanism occurs as neurons exit the cell cycle and become committed to their adult state. The transition from proliferating neural stem/progenitor cells to post-mitotic neurons requires a switch in subunit composition of the npBAF and nBAF complexes. As neural progenitors exit mitosis and differentiate into neurons, npBAF complexes which contain ACTL6A/BAF53A and PHF10/BAF45A, are exchanged for homologous alternative ACTL6B/BAF53B and DPF1/BAF45B or DPF3/BAF45C subunits in neuron-specific complexes (nBAF). The npBAF complex is essential for the self-renewal/proliferative capacity of the multipotent neural stem cells. The nBAF complex along with CREST plays a role regulating the activity of genes essential for dendrite growth. This chain is PHD finger protein 10 (Phf10), found in Rattus norvegicus (Rat).